Here is a 374-residue protein sequence, read N- to C-terminus: MAIRKKSTKSPPVLSHEFILQNHADIVSCVAMVFLLGLMFEITAKASIIFVTLQYNVTLPATEEQATESTSLYYYGIKDLATVFFYMLVAIIIHAIIQEYVLDKINRRMHFSKTKHSKFNESGQLSAFYLFSCIWGTFILISENYISDPTILWRAYPHNLMTFQMKFFYIAQLAYWFHAFPELYFQKTKKEDIPRQLVYIGLYLFHIAGAYLLNLNHLGLVLLVLHYFVEFLFHISRLFYFSDEKYQKGFSLWAVLFVLGRLLTLILSVLTVGFGLARAENQKLDFSAGNFNVLAVRIAVLASICITQAFMMWKFINFQLRRWREHSTFQAPVVKKKPTVTKGRSSRKGTENGVNGTVTSNGADSPRNRKEKSS.

At 2 to 29 the chain is on the cytoplasmic side; sequence AIRKKSTKSPPVLSHEFILQNHADIVSC. Residues 30-50 form a helical membrane-spanning segment; the sequence is VAMVFLLGLMFEITAKASIIF. Topologically, residues 51–76 are lumenal; that stretch reads VTLQYNVTLPATEEQATESTSLYYYG. A glycan (N-linked (GlcNAc...) asparagine) is linked at N56. A helical membrane pass occupies residues 77-97; sequence IKDLATVFFYMLVAIIIHAII. Residues 98 to 121 are Cytoplasmic-facing; sequence QEYVLDKINRRMHFSKTKHSKFNE. A TLC domain is found at 117-326; the sequence is SKFNESGQLS…NFQLRRWREH (210 aa). A helical membrane pass occupies residues 122-142; it reads SGQLSAFYLFSCIWGTFILIS. Topologically, residues 143–159 are lumenal; that stretch reads ENYISDPTILWRAYPHN. A helical transmembrane segment spans residues 160 to 180; it reads LMTFQMKFFYIAQLAYWFHAF. At 181–192 the chain is on the cytoplasmic side; sequence PELYFQKTKKED. The chain crosses the membrane as a helical span at residues 193–213; the sequence is IPRQLVYIGLYLFHIAGAYLL. At 214-217 the chain is on the lumenal side; sequence NLNH. The helical transmembrane segment at 218–238 threads the bilayer; that stretch reads LGLVLLVLHYFVEFLFHISRL. The Cytoplasmic portion of the chain corresponds to 239 to 251; sequence FYFSDEKYQKGFS. Residues 252 to 272 form a helical membrane-spanning segment; that stretch reads LWAVLFVLGRLLTLILSVLTV. Residues 273 to 297 lie on the Lumenal side of the membrane; it reads GFGLARAENQKLDFSAGNFNVLAVR. A helical membrane pass occupies residues 298 to 318; the sequence is IAVLASICITQAFMMWKFINF. At 319-374 the chain is on the cytoplasmic side; it reads QLRRWREHSTFQAPVVKKKPTVTKGRSSRKGTENGVNGTVTSNGADSPRNRKEKSS. A compositionally biased stretch (basic residues) spans 334–347; it reads VKKKPTVTKGRSSR. The tract at residues 334–374 is disordered; sequence VKKKPTVTKGRSSRKGTENGVNGTVTSNGADSPRNRKEKSS. The span at 352–363 shows a compositional bias: polar residues; that stretch reads NGVNGTVTSNGA. Position 365 is a phosphoserine (S365).

Belongs to the TRAM family. Interacts with SEC61B. May interact with Derlin-1/DERL1. In terms of processing, N-glycosylated.

The protein localises to the endoplasmic reticulum membrane. Involved in the translocation of nascent protein chains into or through the endoplasmic reticulum (ER) membrane by facilitating the proper chain positioning at the SEC61 channel. Regulates the exposure of nascent secretory protein chain to the cytosol during translocation into the ER. May affect the phospholipid bilayer in the vicinity of the lateral gate of the SEC61 channel, thereby facilitating ER protein transport. Intimately associates with transmembrane (TM) domain of nascent membrane proteins during the entire integration process into the ER membrane. Associates with the second TM domain of G-protein-coupled receptor opsin/OPSD nascent chain in the ER membrane, which may facilitate its integration into the membrane. Under conditions of ER stress, participates in the disposal of misfolded ER membrane proteins during the unfolded protein response (UPR), an integrated stress response (ISR) pathway, by selectively retrotranslocating misfolded ER-membrane proteins from the ER into the cytosol where they are ubiquitinated and degraded by the proteasome. This Canis lupus familiaris (Dog) protein is Translocating chain-associated membrane protein 1 (TRAM1).